A 445-amino-acid polypeptide reads, in one-letter code: UDP-N-acetylglucosamine--peptide N-acetylglucosaminyltransferase stabilizing protein GtfB (445 aa).

Residues Lys55–Phe171 form a glycosyltransferase 1 region.

Belongs to the GtfB family. In terms of assembly, interacts with glycosyltransferase GtfA; probably forms a heterotetramer with 2 subunits each of GtfA and GtfB. Part of the accessory SecA2/SecY2 protein translocation apparatus.

It localises to the cell membrane. It functions in the pathway protein modification; protein glycosylation. Its function is as follows. Required for the polymorphic O-glycosylation of the serine-rich repeat protein PsrP. A stabilizing protein that is part of the accessory SecA2/SecY2 system specifically required to export serine-rich repeat cell wall proteins encoded upstream in the same operon. The GtfA-GtfB complex adds GlcNAc from UDP-GlcNAc to PsrP, attaching the first sugar residue. Stabilizes the glycosylation activity of GtfA. Has no N-acetylglucosaminyl transferase activity on its own. The chain is UDP-N-acetylglucosamine--peptide N-acetylglucosaminyltransferase stabilizing protein GtfB from Streptococcus pneumoniae serotype 4 (strain ATCC BAA-334 / TIGR4).